The following is a 118-amino-acid chain: Large ribosomal subunit protein uL22c (118 aa).

This sequence belongs to the universal ribosomal protein uL22 family. As to quaternary structure, part of the 50S ribosomal subunit.

Its subcellular location is the plastid. The protein localises to the chloroplast. In terms of biological role, this protein binds specifically to 23S rRNA. The globular domain of the protein is located near the polypeptide exit tunnel on the outside of the subunit, while an extended beta-hairpin is found that lines the wall of the exit tunnel in the center of the 70S ribosome. The chain is Large ribosomal subunit protein uL22c (rpl22) from Physcomitrium patens (Spreading-leaved earth moss).